The chain runs to 320 residues: MSKIQNHQKVVLVGDGAVGSSYAFAMAQQGIAEEFVIVDVVKDRTVGDALDLEDATPFTAPKNIYSGEYSDCKDADLVVITAGAPQKPGETRLDLVNKNLNILSTIVKPVVDSGFDGIFLVAANPVDILTYATWKFSGFPKEKVIGSGISLDSARLRVALGKKFNVSPDSVDAYIMGEHGDSEFAAYSTASIGTKPLLDIAKEEGVSTDELAEIEDSVRNKAYEIINKKGATFYGVGTALMRISKAILRDENAVLPVGAYMDGEYGLNDIYIGTPAVINGQGLNRVIESPLSDDEMKKMTDSATTLKKVLTDGLKALEEK.

NAD(+) is bound by residues valine 18, aspartate 39, arginine 44, tyrosine 69, and 83–84; that span reads GA. Glutamine 86 and arginine 92 together coordinate substrate. NAD(+)-binding positions include threonine 105, 122 to 124, and serine 147; that span reads AAN. 124–127 is a binding site for substrate; sequence NPVD. Residue 152 to 155 coordinates substrate; the sequence is DSAR. Histidine 179 serves as the catalytic Proton acceptor. Tyrosine 223 carries the phosphotyrosine modification. Substrate is bound at residue threonine 232.

It belongs to the LDH/MDH superfamily. LDH family. Homotetramer.

Its subcellular location is the cytoplasm. The enzyme catalyses (S)-lactate + NAD(+) = pyruvate + NADH + H(+). It functions in the pathway fermentation; pyruvate fermentation to lactate; (S)-lactate from pyruvate: step 1/1. Functionally, catalyzes the conversion of lactate to pyruvate. The polypeptide is L-lactate dehydrogenase (Pediococcus pentosaceus (strain ATCC 25745 / CCUG 21536 / LMG 10740 / 183-1w)).